Consider the following 426-residue polypeptide: Serine--tRNA ligase (426 aa).

Residue 230–232 (TAE) coordinates L-serine. ATP is bound at residue 261-263 (RSE). An L-serine-binding site is contributed by Glu284. 348-351 (EISS) lines the ATP pocket. L-serine is bound at residue Ser384.

The protein belongs to the class-II aminoacyl-tRNA synthetase family. Type-1 seryl-tRNA synthetase subfamily. Homodimer. The tRNA molecule binds across the dimer.

It is found in the cytoplasm. The catalysed reaction is tRNA(Ser) + L-serine + ATP = L-seryl-tRNA(Ser) + AMP + diphosphate + H(+). It catalyses the reaction tRNA(Sec) + L-serine + ATP = L-seryl-tRNA(Sec) + AMP + diphosphate + H(+). It functions in the pathway aminoacyl-tRNA biosynthesis; selenocysteinyl-tRNA(Sec) biosynthesis; L-seryl-tRNA(Sec) from L-serine and tRNA(Sec): step 1/1. In terms of biological role, catalyzes the attachment of serine to tRNA(Ser). Is also able to aminoacylate tRNA(Sec) with serine, to form the misacylated tRNA L-seryl-tRNA(Sec), which will be further converted into selenocysteinyl-tRNA(Sec). The polypeptide is Serine--tRNA ligase (Phenylobacterium zucineum (strain HLK1)).